The primary structure comprises 882 residues: Alanine--tRNA ligase (882 aa).

Positions 574, 578, 682, and 686 each coordinate Zn(2+). The disordered stretch occupies residues glycine 853 to proline 882. Over residues glycine 854–leucine 868 the composition is skewed to gly residues.

It belongs to the class-II aminoacyl-tRNA synthetase family. Zn(2+) is required as a cofactor.

It is found in the cytoplasm. The enzyme catalyses tRNA(Ala) + L-alanine + ATP = L-alanyl-tRNA(Ala) + AMP + diphosphate. In terms of biological role, catalyzes the attachment of alanine to tRNA(Ala) in a two-step reaction: alanine is first activated by ATP to form Ala-AMP and then transferred to the acceptor end of tRNA(Ala). Also edits incorrectly charged Ser-tRNA(Ala) and Gly-tRNA(Ala) via its editing domain. The sequence is that of Alanine--tRNA ligase from Thermus thermophilus (strain ATCC 27634 / DSM 579 / HB8).